The following is a 593-amino-acid chain: Proteasome-associated ATPase (593 aa).

Residues leucine 23–glutamine 95 adopt a coiled-coil conformation. An ATP-binding site is contributed by glycine 282–leucine 287. The interval tyrosine 592–leucine 593 is docks into pockets in the proteasome alpha-ring.

This sequence belongs to the AAA ATPase family. In terms of assembly, homohexamer. Assembles into a hexameric ring structure that caps the 20S proteasome core. Strongly interacts with the prokaryotic ubiquitin-like protein Pup through a hydrophobic interface; the interacting region of ARC lies in its N-terminal coiled-coil domain. There is one Pup binding site per ARC hexamer ring. Upon ATP-binding, the C-terminus of ARC interacts with the alpha-rings of the proteasome core, possibly by binding to the intersubunit pockets.

The protein operates within protein degradation; proteasomal Pup-dependent pathway. ATPase which is responsible for recognizing, binding, unfolding and translocation of pupylated proteins into the bacterial 20S proteasome core particle. May be essential for opening the gate of the 20S proteasome via an interaction with its C-terminus, thereby allowing substrate entry and access to the site of proteolysis. Thus, the C-termini of the proteasomal ATPase may function like a 'key in a lock' to induce gate opening and therefore regulate proteolysis. This Geodermatophilus obscurus (strain ATCC 25078 / DSM 43160 / JCM 3152 / CCUG 61914 / KCC A-0152 / KCTC 9177 / NBRC 13315 / NRRL B-3577 / G-20) protein is Proteasome-associated ATPase.